The sequence spans 187 residues: Peptide deformylase (187 aa).

2 residues coordinate Fe cation: C114 and H157. E158 is a catalytic residue. H161 contacts Fe cation.

The protein belongs to the polypeptide deformylase family. Fe(2+) serves as cofactor.

It carries out the reaction N-terminal N-formyl-L-methionyl-[peptide] + H2O = N-terminal L-methionyl-[peptide] + formate. Its function is as follows. Removes the formyl group from the N-terminal Met of newly synthesized proteins. Requires at least a dipeptide for an efficient rate of reaction. N-terminal L-methionine is a prerequisite for activity but the enzyme has broad specificity at other positions. The chain is Peptide deformylase from Enterococcus faecalis (strain ATCC 700802 / V583).